Here is a 380-residue protein sequence, read N- to C-terminus: MALDRSDGLNSLGFAKAPADTRVVVAMSGGVDSSAVAAQLADEGYDVVGVTLQLYDHGAALAKKGACCAGRDIHDAARVAETMGFPHYVLDYENVFKDAVIDEFADSYLAGATPVPCIRCNERVKFKDLLETAKDLDADCMATGHYIQRKMGREKAELHSAADAARDQSYFLFSTKQEQLDFLRFPLGHLESKAETRALAAKYGLSVADKPDSQDICFVPNGNYAAVIEKLRPGAADPGEIVDIDGNVLAMHRGVIHYTIGQRRGLGIGGLDDPLYVVKLDPDTRRVIVGPKEMLSTRTVPVREINWLGDTPFDSQQEWQMDVKIRSTRPPRGAVIRPVSATEAEVELIVAEEGVSPGQACVFYAPEGGRIFGGGWIHKG.

ATP is bound by residues 26-33 (AMSGGVDS) and Leu-52. Cys-120 functions as the Nucleophile in the catalytic mechanism. An intrachain disulfide couples Cys-120 to Cys-217. Gly-144 provides a ligand contact to ATP. The segment at 166-168 (RDQ) is interaction with tRNA. The active-site Cysteine persulfide intermediate is Cys-217.

It belongs to the MnmA/TRMU family.

The protein resides in the cytoplasm. It catalyses the reaction S-sulfanyl-L-cysteinyl-[protein] + uridine(34) in tRNA + AH2 + ATP = 2-thiouridine(34) in tRNA + L-cysteinyl-[protein] + A + AMP + diphosphate + H(+). Catalyzes the 2-thiolation of uridine at the wobble position (U34) of tRNA, leading to the formation of s(2)U34. The sequence is that of tRNA-specific 2-thiouridylase MnmA from Jannaschia sp. (strain CCS1).